Here is a 316-residue protein sequence, read N- to C-terminus: Transcription initiation factor IIB (316 aa).

The segment at 7–38 (FRLRCPVCGSTDIVFNEETGEYVCARCGTIVL) adopts a TFIIB-type zinc-finger fold. Residues Cys11, Cys14, Cys30, and Cys33 each coordinate Zn(2+). Positions 51–73 (FTPEERERRGRTGAPLSPTLHDH) are disordered. 2 repeat units span residues 124–207 (NELD…TKEL) and 218–299 (DHIP…EIMK).

This sequence belongs to the TFIIB family.

In terms of biological role, stabilizes TBP binding to an archaeal box-A promoter. Also responsible for recruiting RNA polymerase II to the pre-initiation complex (DNA-TBP-TFIIB). This chain is Transcription initiation factor IIB, found in Ignicoccus hospitalis (strain KIN4/I / DSM 18386 / JCM 14125).